A 681-amino-acid chain; its full sequence is Dipeptidyl carboxypeptidase (681 aa).

Histidine 470 is a Zn(2+) binding site. The active site involves glutamate 471. Zn(2+) is bound by residues histidine 474 and histidine 477.

This sequence belongs to the peptidase M3 family. Zn(2+) serves as cofactor.

The protein resides in the cytoplasm. It carries out the reaction Hydrolysis of unblocked, C-terminal dipeptides from oligopeptides, with broad specificity. Does not hydrolyze bonds in which P1' is Pro, or both P1 and P1' are Gly.. Stimulated by Mn(2+), Mg(2+), Co(2+) and Ca(2+), inhibited by Cu(2+), Ni(2+), Zn(2+), chymostatin and 1,10-phenanthroline. In terms of biological role, removes dipeptides from the C-termini of N-blocked tripeptides, tetrapeptides and larger peptides. In Escherichia coli (strain K12), this protein is Dipeptidyl carboxypeptidase.